A 131-amino-acid chain; its full sequence is uncharacterized protein (131 aa).

The next 4 membrane-spanning stretches (helical) occupy residues 7–29, 49–69, 76–98, and 102–124; these read LLKFLIQAFMWFAIASEFVSLLY, LVKVLNVIIIYELFTTLLIAL, LILIIDTAMIFFIRELLIVLFTY, and ELSEGIASALILGTLGILRFLYL.

Its subcellular location is the cell membrane. This is an uncharacterized protein from Aquifex aeolicus (strain VF5).